Here is a 70-residue protein sequence, read N- to C-terminus: Small ribosomal subunit protein bS21 (70 aa).

It belongs to the bacterial ribosomal protein bS21 family.

The protein is Small ribosomal subunit protein bS21 of Campylobacter jejuni subsp. jejuni serotype O:23/36 (strain 81-176).